The sequence spans 479 residues: Ribosomal RNA small subunit methyltransferase F (479 aa).

Residues 128–134 (ASAPGSK), Glu-152, Asp-179, and Asp-197 each bind S-adenosyl-L-methionine. Cys-250 functions as the Nucleophile in the catalytic mechanism.

The protein belongs to the class I-like SAM-binding methyltransferase superfamily. RsmB/NOP family.

Its subcellular location is the cytoplasm. It carries out the reaction cytidine(1407) in 16S rRNA + S-adenosyl-L-methionine = 5-methylcytidine(1407) in 16S rRNA + S-adenosyl-L-homocysteine + H(+). In terms of biological role, specifically methylates the cytosine at position 1407 (m5C1407) of 16S rRNA. The sequence is that of Ribosomal RNA small subunit methyltransferase F from Shewanella halifaxensis (strain HAW-EB4).